Reading from the N-terminus, the 595-residue chain is Solute carrier family 13 member 1 (595 aa).

5 helical membrane passes run 13 to 33 (FLLV…IRSK), 40 to 60 (ILFV…ITAL), 77 to 97 (VASA…CLAT), 113 to 133 (VMMV…STAF), and 134 to 154 (LSMW…VEAV). A glycan (N-linked (GlcNAc...) asparagine) is linked at N174. Positions 190–218 (QETNERKEKTKPALGSSNDKGKVSSKMET) are disordered. A compositionally biased stretch (basic and acidic residues) spans 208–218 (DKGKVSSKMET). 8 consecutive transmembrane segments (helical) span residues 239–259 (LMCL…ITGT), 283–303 (SWFL…WIWL), 348–368 (IVTL…DPGF), 381–401 (GYVT…LIPA), 464–484 (PLGS…VTSL), 491–511 (PATI…IHVN), 512–532 (PLHI…LPVA), and 553–573 (AGLG…FTWI). An N-linked (GlcNAc...) asparagine glycan is attached at N591.

The protein belongs to the SLC13A/DASS transporter (TC 2.A.47) family. NADC subfamily. As to expression, kidney and intestine.

It is found in the apical cell membrane. It catalyses the reaction sulfate(out) + 3 Na(+)(out) = sulfate(in) + 3 Na(+)(in). It carries out the reaction selenate(out) + 3 Na(+)(out) = selenate(in) + 3 Na(+)(in). The catalysed reaction is thiosulfate(out) + 3 Na(+)(out) = thiosulfate(in) + 3 Na(+)(in). Its function is as follows. Sodium:sulfate symporter that mediates sulfate reabsorption in the kidney and small intestine. Can also mediate the transport of selenate and thiosulfate. This chain is Solute carrier family 13 member 1 (Slc13a1), found in Rattus norvegicus (Rat).